The following is a 169-amino-acid chain: Crossover junction endodeoxyribonuclease RuvC (169 aa).

Residues Asp7, Glu67, and Asp140 contribute to the active site. 3 residues coordinate Mg(2+): Asp7, Glu67, and Asp140.

Belongs to the RuvC family. As to quaternary structure, homodimer which binds Holliday junction (HJ) DNA. The HJ becomes 2-fold symmetrical on binding to RuvC with unstacked arms; it has a different conformation from HJ DNA in complex with RuvA. In the full resolvosome a probable DNA-RuvA(4)-RuvB(12)-RuvC(2) complex forms which resolves the HJ. It depends on Mg(2+) as a cofactor.

It localises to the cytoplasm. The enzyme catalyses Endonucleolytic cleavage at a junction such as a reciprocal single-stranded crossover between two homologous DNA duplexes (Holliday junction).. Its function is as follows. The RuvA-RuvB-RuvC complex processes Holliday junction (HJ) DNA during genetic recombination and DNA repair. Endonuclease that resolves HJ intermediates. Cleaves cruciform DNA by making single-stranded nicks across the HJ at symmetrical positions within the homologous arms, yielding a 5'-phosphate and a 3'-hydroxyl group; requires a central core of homology in the junction. The consensus cleavage sequence is 5'-(A/T)TT(C/G)-3'. Cleavage occurs on the 3'-side of the TT dinucleotide at the point of strand exchange. HJ branch migration catalyzed by RuvA-RuvB allows RuvC to scan DNA until it finds its consensus sequence, where it cleaves and resolves the cruciform DNA. The protein is Crossover junction endodeoxyribonuclease RuvC of Clostridioides difficile (strain 630) (Peptoclostridium difficile).